The chain runs to 505 residues: Sensor protein FixL (505 aa).

One can recognise a PAS 1 domain in the interval 14–85 (RGEHFRVRIE…SAIKRVSERG (72 aa)). The 53-residue stretch at 88–140 (FDVSFRVAGTSNAGQWIRARAGLIRDEAGTARHLSGIFLDIDEEKQVEGALRT) folds into the PAC 1 domain. The PAS 2 domain maps to 141 to 208 (RETHLRSILH…RHDSYISRYR (68 aa)). His200 contacts heme. The region spanning 209-268 (TTSDPHIIGIGRIVTGKRRDGTTFPMHLSIGEMQSGGEPYFTGFVRDLTEHQQTQARLQE) is the PAC 2 domain. In terms of domain architecture, Histidine kinase spans 288 to 503 (ALAHELNQPL…TFRFTLPAAD (216 aa)). His291 is modified (phosphohistidine; by autocatalysis).

It depends on heme as a cofactor.

The catalysed reaction is ATP + protein L-histidine = ADP + protein N-phospho-L-histidine.. Its activity is regulated as follows. The heme moiety regulates the kinase activity. Putative oxygen sensor; modulates the activity of FixJ, a transcriptional activator of nitrogen fixation fixK gene. FixL probably acts as a kinase that phosphorylates FixJ. In Bradyrhizobium diazoefficiens (strain JCM 10833 / BCRC 13528 / IAM 13628 / NBRC 14792 / USDA 110), this protein is Sensor protein FixL (fixL).